The chain runs to 429 residues: BURP domain-containing protein 3 (429 aa).

A signal peptide spans 1-21 (MDRLLACLLGFLLIASVGSHA). Residues 59-81 (GGGVHVDAGHGKPGGTTVDVGKG) are disordered. A BURP domain is found at 213–428 (FFLEKDLHPG…PQDHVVWTRS (216 aa)).

As to expression, expressed in stems, leaves, shoot, panicles and stamen.

The protein is BURP domain-containing protein 3 (BURP3) of Oryza sativa subsp. japonica (Rice).